The sequence spans 20 residues: Brevinin-1SPd (20 aa).

An intrachain disulfide couples C14 to C20.

As to expression, expressed by the skin glands.

It is found in the secreted. Its function is as follows. Antimicrobial peptide with activity against Gram-negative and Gram-positive bacteria (MIC=13 uM against E.coli, MIC=3 uM against S.aureus) and fungi (MIC=3 uM against C.albicans). Shows hemolytic activity on human erythrocytes (HC(50)=8 uM). This chain is Brevinin-1SPd, found in Lithobates septentrionalis (Mink frog).